Reading from the N-terminus, the 442-residue chain is Protein PHYTOCHROME KINASE SUBSTRATE 2 (442 aa).

Residues 110–130 (IFVGPKQSSKNSSETPSLRSE) form a disordered region. Low complexity predominate over residues 121–130 (SSETPSLRSE). A phosphoserine mark is found at serine 239 and serine 245. A disordered region spans residues 394-442 (VSGDSYTSMNRTPSYVPRFPVEANPTSTETRRRISSSSVSHTQSPFLYT). The span at 397–406 (DSYTSMNRTP) shows a compositional bias: polar residues. Residues 428 to 442 (SSSSVSHTQSPFLYT) are compositionally biased toward low complexity.

This sequence belongs to the PKS family. As to quaternary structure, interacts with PKS1, RPT3, PHOT1 and PHOT2. In terms of tissue distribution, expressed in leaves, with the strongest expression on edges of the laminas. Not found in roots.

The protein localises to the cell membrane. Functionally, acts predominantly in the phot1 pathway. Involved in the leaf positioning and also in the phot2 pathway controlling the leaf flattening. Component of the network that modulates the very low-fluence response (VLFR) branch of phyA signaling. Regulates phytochrome-mediated photomorphogenesis and hypocotyl phototropism. May act by controlling auxin homeostasis. This Arabidopsis thaliana (Mouse-ear cress) protein is Protein PHYTOCHROME KINASE SUBSTRATE 2 (PKS2).